Reading from the N-terminus, the 210-residue chain is N-(5'-phosphoribosyl)anthranilate isomerase (210 aa).

The protein belongs to the TrpF family.

The catalysed reaction is N-(5-phospho-beta-D-ribosyl)anthranilate = 1-(2-carboxyphenylamino)-1-deoxy-D-ribulose 5-phosphate. Its pathway is amino-acid biosynthesis; L-tryptophan biosynthesis; L-tryptophan from chorismate: step 3/5. This Staphylococcus aureus (strain MRSA252) protein is N-(5'-phosphoribosyl)anthranilate isomerase.